The sequence spans 205 residues: LIM domain-containing protein PLIM2b (205 aa).

LIM zinc-binding domains follow at residues 8 to 68 (DKCN…LFKE) and 102 to 162 (DKCA…LFME). Residues 177–205 (RTASGNTLPPEPTEDVAVEAKEENGVSES) form a disordered region. Positions 194-205 (VEAKEENGVSES) are enriched in basic and acidic residues.

As to quaternary structure, interacts with F-actin. Predominantly expressed in flowers and in pollen grains. Detected in vasculature and roots.

Its subcellular location is the cytoplasm. The protein localises to the cytoskeleton. In terms of biological role, binds to actin filaments and promotes cross-linking into thick bundles. Has an actin-stabilizing activity. The actin regulatory activities are inhibited by pH &gt; 6.8 but are [Ca(2+)] independent. This Arabidopsis thaliana (Mouse-ear cress) protein is LIM domain-containing protein PLIM2b.